We begin with the raw amino-acid sequence, 488 residues long: DNA polymerase II small subunit (488 aa).

This sequence belongs to the DNA polymerase delta/II small subunit family. As to quaternary structure, heterodimer of a large subunit and a small subunit.

It catalyses the reaction DNA(n) + a 2'-deoxyribonucleoside 5'-triphosphate = DNA(n+1) + diphosphate. It carries out the reaction Exonucleolytic cleavage in the 3'- to 5'-direction to yield nucleoside 5'-phosphates.. Its function is as follows. Possesses two activities: a DNA synthesis (polymerase) and an exonucleolytic activity that degrades single-stranded DNA in the 3' to 5' direction. Has a template-primer preference which is characteristic of a replicative DNA polymerase. This is DNA polymerase II small subunit (polB) from Thermoplasma acidophilum (strain ATCC 25905 / DSM 1728 / JCM 9062 / NBRC 15155 / AMRC-C165).